The primary structure comprises 241 residues: 7-cyano-7-deazaguanine synthase (241 aa).

F15–L25 provides a ligand contact to ATP. 4 residues coordinate Zn(2+): C203, C218, C221, and C224.

This sequence belongs to the QueC family. The cofactor is Zn(2+).

It catalyses the reaction 7-carboxy-7-deazaguanine + NH4(+) + ATP = 7-cyano-7-deazaguanine + ADP + phosphate + H2O + H(+). It functions in the pathway purine metabolism; 7-cyano-7-deazaguanine biosynthesis. Its function is as follows. Catalyzes the ATP-dependent conversion of 7-carboxy-7-deazaguanine (CDG) to 7-cyano-7-deazaguanine (preQ(0)). The chain is 7-cyano-7-deazaguanine synthase from Azorhizobium caulinodans (strain ATCC 43989 / DSM 5975 / JCM 20966 / LMG 6465 / NBRC 14845 / NCIMB 13405 / ORS 571).